The sequence spans 115 residues: Large ribosomal subunit protein bL20c (115 aa).

The protein belongs to the bacterial ribosomal protein bL20 family.

It is found in the plastid. The protein resides in the chloroplast. Binds directly to 23S ribosomal RNA and is necessary for the in vitro assembly process of the 50S ribosomal subunit. It is not involved in the protein synthesizing functions of that subunit. The chain is Large ribosomal subunit protein bL20c from Cycas taitungensis (Prince sago).